The primary structure comprises 201 residues: MSRYRGPRFKKIRRLGALPGLTNKKPRAGSDLRNQSRSGKKSQYRIRLEEKQKLRFHYGLTERQLLKYVRIARKAKGSTGQVLLQLLEMRLDNILFRLGMASTIPAARQLVNHRHILVNGRIVDIPSYRCKPRDIITAKDEQKSKALIQISLDSSPHEELPNHLTLHPFQYKGLVNQIIDSKWVGLKINELLVVEYYSRQT.

The tract at residues 20–44 (GLTNKKPRAGSDLRNQSRSGKKSQY) is disordered. Residues 89 to 150 (MRLDNILFRL…EQKSKALIQI (62 aa)) form the S4 RNA-binding domain.

This sequence belongs to the universal ribosomal protein uS4 family. Part of the 30S ribosomal subunit. Contacts protein S5. The interaction surface between S4 and S5 is involved in control of translational fidelity.

The protein localises to the plastid. The protein resides in the chloroplast. In terms of biological role, one of the primary rRNA binding proteins, it binds directly to 16S rRNA where it nucleates assembly of the body of the 30S subunit. Its function is as follows. With S5 and S12 plays an important role in translational accuracy. In Nicotiana tomentosiformis (Tobacco), this protein is Small ribosomal subunit protein uS4c (rps4).